The sequence spans 63 residues: Large ribosomal subunit protein uL29 (63 aa).

It belongs to the universal ribosomal protein uL29 family.

This Alcanivorax borkumensis (strain ATCC 700651 / DSM 11573 / NCIMB 13689 / SK2) protein is Large ribosomal subunit protein uL29.